We begin with the raw amino-acid sequence, 460 residues long: Exodeoxyribonuclease 7 large subunit (460 aa).

The interval A438–D460 is disordered. The segment covering R439–Q450 has biased composition (basic and acidic residues). The segment covering S451 to D460 has biased composition (polar residues).

It belongs to the XseA family. In terms of assembly, heterooligomer composed of large and small subunits.

Its subcellular location is the cytoplasm. The catalysed reaction is Exonucleolytic cleavage in either 5'- to 3'- or 3'- to 5'-direction to yield nucleoside 5'-phosphates.. In terms of biological role, bidirectionally degrades single-stranded DNA into large acid-insoluble oligonucleotides, which are then degraded further into small acid-soluble oligonucleotides. This is Exodeoxyribonuclease 7 large subunit from Brevibacillus brevis (strain 47 / JCM 6285 / NBRC 100599).